The chain runs to 114 residues: Ribonuclease P protein component (114 aa).

This sequence belongs to the RnpA family. As to quaternary structure, consists of a catalytic RNA component (M1 or rnpB) and a protein subunit.

It carries out the reaction Endonucleolytic cleavage of RNA, removing 5'-extranucleotides from tRNA precursor.. RNaseP catalyzes the removal of the 5'-leader sequence from pre-tRNA to produce the mature 5'-terminus. It can also cleave other RNA substrates such as 4.5S RNA. The protein component plays an auxiliary but essential role in vivo by binding to the 5'-leader sequence and broadening the substrate specificity of the ribozyme. The chain is Ribonuclease P protein component from Buchnera aphidicola subsp. Schizaphis graminum (strain Sg).